The chain runs to 359 residues: 3-isopropylmalate dehydrogenase (359 aa).

Position 77-88 (77-88) interacts with NAD(+); the sequence is GPKWGTGDVRPE. Residues R95, R105, R134, and D223 each contribute to the substrate site. The Mg(2+) site is built by D223, D248, and D252. NAD(+) is bound at residue 287 to 298; it reads GSAPDLPAGKVN.

Belongs to the isocitrate and isopropylmalate dehydrogenases family. Homodimer. Requires Mg(2+) as cofactor. The cofactor is Mn(2+).

The protein localises to the cytoplasm. It catalyses the reaction (2R,3S)-3-isopropylmalate + NAD(+) = 4-methyl-2-oxopentanoate + CO2 + NADH. The protein operates within amino-acid biosynthesis; L-leucine biosynthesis; L-leucine from 3-methyl-2-oxobutanoate: step 3/4. In terms of biological role, catalyzes the oxidation of 3-carboxy-2-hydroxy-4-methylpentanoate (3-isopropylmalate) to 3-carboxy-4-methyl-2-oxopentanoate. The product decarboxylates to 4-methyl-2 oxopentanoate. The protein is 3-isopropylmalate dehydrogenase (LEU2) of Diutina rugosa (Yeast).